The following is a 229-amino-acid chain: DNA repair protein RecO (229 aa).

The protein belongs to the RecO family.

Involved in DNA repair and RecF pathway recombination. The chain is DNA repair protein RecO from Legionella pneumophila (strain Paris).